Consider the following 179-residue polypeptide: Cell division protein ZapC (179 aa).

This sequence belongs to the ZapC family. As to quaternary structure, interacts directly with FtsZ.

Its subcellular location is the cytoplasm. In terms of biological role, contributes to the efficiency of the cell division process by stabilizing the polymeric form of the cell division protein FtsZ. Acts by promoting interactions between FtsZ protofilaments and suppressing the GTPase activity of FtsZ. In Tolumonas auensis (strain DSM 9187 / NBRC 110442 / TA 4), this protein is Cell division protein ZapC.